The following is a 210-amino-acid chain: Transcription factor ALC (210 aa).

Residues 1-49 (MGDSDVGDRLPPPSSSDELSSFLRQILSRTPTAQPSSPPKSTNVSSAET) are disordered. Residues 27 to 48 (LSRTPTAQPSSPPKSTNVSSAE) are compositionally biased toward polar residues. A bHLH domain is found at 93-142 (IDAQFHNLSEKKRRSKINEKMKALQKLIPNSNKTDKASMLDEAIEYLKQL).

Homodimer. As to expression, expressed constitutively in roots, leaves, stems, and flowers. Confined to the valve margins of the silique.

The protein localises to the nucleus. Its function is as follows. Required for the dehiscence of fruit, especially for the separation of the valve cells from the replum. Promotes the differentiation of a strip of labile nonlignified cells sandwiched between layers of lignified cells. The protein is Transcription factor ALC (ALC) of Arabidopsis thaliana (Mouse-ear cress).